The following is a 72-amino-acid chain: Neuropeptide IMFamide (72 aa).

The signal sequence occupies residues 1–24; sequence MMRFTIGVVCLVAVLLSLAEVSEA. F36 is modified (phenylalanine amide). Residues 40–72 constitute a propeptide that is removed on maturation; it reads GPTEYDQRGKTFTALCEIATEACQAWFPSTENK.

In terms of tissue distribution, expressed in corpora cardiaca (CC), corpora allata (CA), antennal lobe (AL) and gnathal ganglion (GNG) (at protein level). Expression detected in only a few animals (at protein level).

The protein resides in the secreted. This is Neuropeptide IMFamide from Agrotis ipsilon (Black cutworm moth).